Consider the following 429-residue polypeptide: Adenylosuccinate synthetase (429 aa).

GTP-binding positions include 12-18 (GDEGKGK) and 40-42 (GHT). The active-site Proton acceptor is the Asp13. 2 residues coordinate Mg(2+): Asp13 and Gly40. IMP is bound by residues 13 to 16 (DEGK), 38 to 41 (NAGH), Thr128, Arg142, Gln223, Thr238, and Arg302. The Proton donor role is filled by His41. A substrate-binding site is contributed by 298–304 (TVTGRPR). GTP is bound by residues Arg304, 330–332 (LLD), and 412–414 (SVG).

It belongs to the adenylosuccinate synthetase family. As to quaternary structure, homodimer. Mg(2+) is required as a cofactor.

The protein localises to the cytoplasm. It catalyses the reaction IMP + L-aspartate + GTP = N(6)-(1,2-dicarboxyethyl)-AMP + GDP + phosphate + 2 H(+). It functions in the pathway purine metabolism; AMP biosynthesis via de novo pathway; AMP from IMP: step 1/2. Its function is as follows. Plays an important role in the de novo pathway of purine nucleotide biosynthesis. Catalyzes the first committed step in the biosynthesis of AMP from IMP. The protein is Adenylosuccinate synthetase of Lactobacillus johnsonii (strain CNCM I-12250 / La1 / NCC 533).